The following is a 544-amino-acid chain: Glutamyl-tRNA(Gln) amidotransferase subunit B, chloroplastic/mitochondrial (544 aa).

This sequence belongs to the GatB/GatE family. GatB subfamily. In terms of assembly, subunit of the heterotrimeric GatCAB amidotransferase (AdT) complex, composed of A, B and C subunits.

Its subcellular location is the mitochondrion. The protein localises to the plastid. It is found in the chloroplast. The catalysed reaction is L-glutamyl-tRNA(Gln) + L-glutamine + ATP + H2O = L-glutaminyl-tRNA(Gln) + L-glutamate + ADP + phosphate + H(+). Its function is as follows. Allows the formation of correctly charged Gln-tRNA(Gln) through the transamidation of misacylated Glu-tRNA(Gln) in chloroplasts and mitochondria. The reaction takes place in the presence of glutamine and ATP through an activated gamma-phospho-Glu-tRNA(Gln). The protein is Glutamyl-tRNA(Gln) amidotransferase subunit B, chloroplastic/mitochondrial of Oryza sativa subsp. japonica (Rice).